We begin with the raw amino-acid sequence, 363 residues long: Peptide chain release factor 1 (363 aa).

An N5-methylglutamine modification is found at glutamine 237. The span at 286–295 shows a compositional bias: basic and acidic residues; the sequence is EKRRSAEATT. The disordered stretch occupies residues 286-305; that stretch reads EKRRSAEATTRRNLVGSGDR.

This sequence belongs to the prokaryotic/mitochondrial release factor family. Methylated by PrmC. Methylation increases the termination efficiency of RF1.

The protein localises to the cytoplasm. Its function is as follows. Peptide chain release factor 1 directs the termination of translation in response to the peptide chain termination codons UAG and UAA. The sequence is that of Peptide chain release factor 1 from Shewanella amazonensis (strain ATCC BAA-1098 / SB2B).